The sequence spans 526 residues: MTKDIHQHRILILDFGSQYTQLIARRVREIGVYCELWAWDVTEEQIREFNPSGIILSGGPESVTEAGSPRAPEYVFNAGVPVFGICYGMQTMAEQLGGKVQSSTEREFGYAQVEVLGQTNALLRSIEDAIAPNGNALLDVWMSHGDKVTAIPADFTTIAQTATCPHAAMACESKHFYGVQFHPEVTHTRQGARMLEHFVKDICGCECLWTPATIIDDAVARIREQVGDDEVILGLSGGVDSSVVAMLVHRAIGDRLTCVFVDNGLLRLNEGEQVMEMFGDHFGLNIIKVEAEERFLSALAGEDEPEAKRKIIGRVFVEVFDDEAKKLKNARWLAQGTIYPDVIESAASKTGKAHVIKSHHNVGGMPAEMKMGLVEPLRELFKDEVRRVGLELGLPYDMLYRHPFPGPGLGVRVLGEVKKEYCDILRRADAVFIEELRKADLYNQVSQAFAVFLPVRSVGVMGDGRKYDWVIALRAVETIDFMTAHWAHLPYDFLGHVSNRIINEINGISRVVYDVSGKPPATIEWE.

The region spanning 9-208 (RILILDFGSQ…VKDICGCECL (200 aa)) is the Glutamine amidotransferase type-1 domain. Residue Cys86 is the Nucleophile of the active site. Catalysis depends on residues His182 and Glu184. One can recognise a GMPS ATP-PPase domain in the interval 209–401 (WTPATIIDDA…LGLPYDMLYR (193 aa)). Position 236-242 (236-242 (SGGVDSS)) interacts with ATP.

Homodimer.

The enzyme catalyses XMP + L-glutamine + ATP + H2O = GMP + L-glutamate + AMP + diphosphate + 2 H(+). The protein operates within purine metabolism; GMP biosynthesis; GMP from XMP (L-Gln route): step 1/1. Functionally, catalyzes the synthesis of GMP from XMP. This chain is GMP synthase [glutamine-hydrolyzing], found in Aeromonas salmonicida (strain A449).